The primary structure comprises 456 residues: RuvB-like helicase 1 (456 aa).

ATP is bound at residue 71–78; sequence GGAGTGKT.

The protein belongs to the RuvB family. May form heterododecamers with RVB2. Component of the SWR1 chromatin remodeling complex, the INO80 chromatin remodeling complex, and of the R2TP complex.

It localises to the nucleus. It catalyses the reaction ATP + H2O = ADP + phosphate + H(+). In terms of biological role, DNA helicase which participates in several chromatin remodeling complexes, including the SWR1 and the INO80 complexes. The SWR1 complex mediates the ATP-dependent exchange of histone H2A for the H2A variant HZT1 leading to transcriptional regulation of selected genes by chromatin remodeling. The INO80 complex remodels chromatin by shifting nucleosomes and is involved in DNA repair. Also involved in pre-rRNA processing. The protein is RuvB-like helicase 1 (rvb1) of Schizosaccharomyces pombe (strain 972 / ATCC 24843) (Fission yeast).